Consider the following 339-residue polypeptide: MIRVAINGYGRIGRSILRALYESAKRDRIQIVAINELAKPEAMLHLTQYDTTHGRFHTQVKLDNQHMIIGDDAIKLLHEPNPANLPWKELDIDIVYEATGVINDRQECEAHLKAGAKQVLISHPSSNDVDATIVYGVNQDLLRAEHTVVSNASCTTNCIVPVIDVLDRHFEVKSGAITTIHSAMNDQQVIDAYHDDLRRTRAAGQSIIPVDTKLARGIERILPHMKNKFEAISVRVPTINVTAIDLSVTLNKRVDIELVNRVLKQATEGSFSGVVGFTNEPLVSCDFNHDPRSSIVDGTQTRVSDGHLVKLLLWCDNEWGFANRMLDTSLEMIKAKRSS.

11-12 (RI) contacts NAD(+). Substrate-binding positions include 153–155 (SCT), Arg-199, 212–213 (TK), and Arg-235. The active-site Nucleophile is the Cys-154. An NAD(+)-binding site is contributed by Asn-317.

This sequence belongs to the glyceraldehyde-3-phosphate dehydrogenase family. Epd subfamily. In terms of assembly, homotetramer.

The protein localises to the cytoplasm. It catalyses the reaction D-erythrose 4-phosphate + NAD(+) + H2O = 4-phospho-D-erythronate + NADH + 2 H(+). Its pathway is cofactor biosynthesis; pyridoxine 5'-phosphate biosynthesis; pyridoxine 5'-phosphate from D-erythrose 4-phosphate: step 1/5. Catalyzes the NAD-dependent conversion of D-erythrose 4-phosphate to 4-phosphoerythronate. This Shewanella halifaxensis (strain HAW-EB4) protein is D-erythrose-4-phosphate dehydrogenase.